The following is a 178-amino-acid chain: Fatty-acid and retinol-binding protein 1 (178 aa).

Residues Met-1–Ala-16 form the signal peptide. Residues Asn-44 and Asn-75 are each glycosylated (N-linked (GlcNAc...) asparagine). 2 coiled-coil regions span residues Asp-67–Asn-89 and Lys-123–Thr-154. N-linked (GlcNAc...) asparagine glycosylation is present at Asn-157.

The protein belongs to the fatty-acid and retinol-binding protein (FARBP) family. In terms of processing, N-glycosylated.

The protein resides in the secreted. Binds retinol and different fatty acids. This chain is Fatty-acid and retinol-binding protein 1, found in Onchocerca gutturosa.